A 134-amino-acid chain; its full sequence is MDNQQDNHIKLLNPLTLAYMGDAVLDQYVRTYIVLKLKSKPNKLHQMSKKYVSAKSQAQTLEYLMEQEWFTDEEMDILKRGRNAKSHTKAKNTDVQTYRKSSAIEAVIGFLYLEKREERLEALLNKIITIVNER.

The active site involves Asp-22.

Belongs to the MrnC RNase family. Homodimer. Requires Mg(2+) as cofactor.

It is found in the cytoplasm. Functionally, involved in correct processing of both the 5' and 3' ends of 23S rRNA precursor. Processes 30S rRNA precursor transcript even in absence of ribonuclease 3 (Rnc); Rnc processes 30S rRNA into smaller rRNA precursors. In Staphylococcus aureus (strain NCTC 8325 / PS 47), this protein is Mini-ribonuclease 3.